The following is a 428-amino-acid chain: Histidine--tRNA ligase (428 aa).

Belongs to the class-II aminoacyl-tRNA synthetase family. As to quaternary structure, homodimer.

The protein localises to the cytoplasm. It catalyses the reaction tRNA(His) + L-histidine + ATP = L-histidyl-tRNA(His) + AMP + diphosphate + H(+). The protein is Histidine--tRNA ligase of Bordetella bronchiseptica (strain ATCC BAA-588 / NCTC 13252 / RB50) (Alcaligenes bronchisepticus).